A 431-amino-acid polypeptide reads, in one-letter code: Enolase (431 aa).

Gln-167 provides a ligand contact to (2R)-2-phosphoglycerate. The active-site Proton donor is Glu-209. Positions 246, 287, and 314 each coordinate Mg(2+). Lys-339, Arg-368, Ser-369, and Lys-390 together coordinate (2R)-2-phosphoglycerate. Lys-339 acts as the Proton acceptor in catalysis.

It belongs to the enolase family. The cofactor is Mg(2+).

The protein resides in the cytoplasm. Its subcellular location is the secreted. It localises to the cell surface. It carries out the reaction (2R)-2-phosphoglycerate = phosphoenolpyruvate + H2O. The protein operates within carbohydrate degradation; glycolysis; pyruvate from D-glyceraldehyde 3-phosphate: step 4/5. In terms of biological role, catalyzes the reversible conversion of 2-phosphoglycerate (2-PG) into phosphoenolpyruvate (PEP). It is essential for the degradation of carbohydrates via glycolysis. The protein is Enolase of Prochlorococcus marinus (strain MIT 9303).